The following is a 61-amino-acid chain: Large ribosomal subunit protein bL32 (61 aa).

The interval 1–22 (MAVPKQKSSKSRGRKRRTHQKV) is disordered. Residues 7–20 (KSSKSRGRKRRTHQ) are compositionally biased toward basic residues.

Belongs to the bacterial ribosomal protein bL32 family.

This is Large ribosomal subunit protein bL32 from Desulforapulum autotrophicum (strain ATCC 43914 / DSM 3382 / VKM B-1955 / HRM2) (Desulfobacterium autotrophicum).